The chain runs to 218 residues: RNA polymerase sigma-H factor (218 aa).

A Polymerase core binding motif is present at residues 62–75 (DIVQEGMIGLYKSI). The segment at residues 182–201 (YQEISDELNRHVKSIDNALQ) is a DNA-binding region (H-T-H motif).

The protein belongs to the sigma-70 factor family. As to quaternary structure, interacts transiently with the RNAP core.

Functionally, sigma factors are initiation factors that promote the attachment of RNA polymerase (RNAP) to specific initiation sites and are then released. This sigma factor is involved in the transition to post-exponential phase in the beginning of sporulation. It is also required for transcription of several stationary phase genes. Association with the RNAP core increases rapidly in early exponential phase, and reamins constant expression level after. The protein is RNA polymerase sigma-H factor (sigH) of Bacillus subtilis (strain 168).